A 261-amino-acid chain; its full sequence is Putative hydro-lyase VSAL_I1435 (261 aa).

Belongs to the D-glutamate cyclase family.

This is Putative hydro-lyase VSAL_I1435 from Aliivibrio salmonicida (strain LFI1238) (Vibrio salmonicida (strain LFI1238)).